Here is a 321-residue protein sequence, read N- to C-terminus: MGRPPCCDKVGIKKGPWTPEEDIILVSYIQEHGPGNWRSVPTNTGLLRCSKSCRLRWTNYLRPGIKRGNFTPHEEGMIIHLQALLGNKWAAIASYLPQRTDNDIKNYWNTHLKKKIKKFQSALSPHMASDSTTSTCTNHQFVPRSYAGDDHHRRGSSFEVINGHSSAHPSLNSPISTYASSTENISRLLEGWMRSSPKATKEKLHQNSSLEEGSIDMTGNSMAVAAVTSVQCYRPKLEQGGGELVANDEFESILEYENLNDDHHQTTDATIPSDDHDHDHEMKMDHDQKKHNPPLSFLEKWLLDESAAQGEEMMDQLSPIF.

HTH myb-type domains are found at residues 9-65 (KVGI…RPGI) and 66-116 (KRGN…KKKI). 2 DNA-binding regions (H-T-H motif) span residues 37 to 61 (WRSV…TNYL) and 89 to 112 (WAAI…NTHL). An S-nitrosocysteine mark is found at cysteine 49 and cysteine 53. Disordered regions lie at residues 196–215 (SPKA…EGSI) and 263–291 (HHQT…QKKH). Residues 206–215 (QNSSLEEGSI) are compositionally biased toward polar residues. Residues 273–290 (SDDHDHDHEMKMDHDQKK) are compositionally biased toward basic and acidic residues.

As to expression, restricted to stomatal guard cells. Mostly expressed in leaves, cotyledons, hypocotyls, seeds and ripened berry skins.

The protein localises to the nucleus. Transcription factor involved in the regulation of gene (e.g. drought-regulated and flavonoid biosynthetic genes) expression and stomatal movements leading to negative regulation of responses to drought and responses to other physiological stimuli (e.g. light). In Vitis vinifera (Grape), this protein is Transcription factor MYB60.